A 151-amino-acid chain; its full sequence is Endoribonuclease YbeY (151 aa).

Positions 114, 118, and 124 each coordinate Zn(2+).

The protein belongs to the endoribonuclease YbeY family. Requires Zn(2+) as cofactor.

Its subcellular location is the cytoplasm. Its function is as follows. Single strand-specific metallo-endoribonuclease involved in late-stage 70S ribosome quality control and in maturation of the 3' terminus of the 16S rRNA. In Hamiltonella defensa subsp. Acyrthosiphon pisum (strain 5AT), this protein is Endoribonuclease YbeY.